We begin with the raw amino-acid sequence, 392 residues long: LL-diaminopimelate aminotransferase (392 aa).

Residues Tyr-15, Gly-40, Lys-104, Tyr-128, and Asn-178 each coordinate substrate. Pyridoxal 5'-phosphate contacts are provided by residues 103–104 (SK), Tyr-128, Asn-178, Tyr-209, and 237–239 (SVS). Lys-240 is subject to N6-(pyridoxal phosphate)lysine. Pyridoxal 5'-phosphate is bound at residue Arg-248. Arg-366 is a binding site for substrate.

This sequence belongs to the class-I pyridoxal-phosphate-dependent aminotransferase family. LL-diaminopimelate aminotransferase subfamily. Homodimer. Pyridoxal 5'-phosphate is required as a cofactor.

The catalysed reaction is (2S,6S)-2,6-diaminopimelate + 2-oxoglutarate = (S)-2,3,4,5-tetrahydrodipicolinate + L-glutamate + H2O + H(+). Its pathway is amino-acid biosynthesis; L-lysine biosynthesis via DAP pathway; LL-2,6-diaminopimelate from (S)-tetrahydrodipicolinate (aminotransferase route): step 1/1. Involved in the synthesis of meso-diaminopimelate (m-DAP or DL-DAP), required for both lysine and peptidoglycan biosynthesis. Catalyzes the direct conversion of tetrahydrodipicolinate to LL-diaminopimelate. The chain is LL-diaminopimelate aminotransferase from Desulforudis audaxviator (strain MP104C).